Consider the following 450-residue polypeptide: Glutamate--tRNA ligase 2 (450 aa).

A 'HIGH' region motif is present at residues 10 to 20 (PSPTGFLHIGG). The short motif at 232–236 (KLSKR) is the 'KMSKS' region element. Residue Lys235 coordinates ATP.

It belongs to the class-I aminoacyl-tRNA synthetase family. Glutamate--tRNA ligase type 1 subfamily. In terms of assembly, monomer.

It is found in the cytoplasm. It carries out the reaction tRNA(Glu) + L-glutamate + ATP = L-glutamyl-tRNA(Glu) + AMP + diphosphate. Functionally, catalyzes the attachment of glutamate to tRNA(Glu) in a two-step reaction: glutamate is first activated by ATP to form Glu-AMP and then transferred to the acceptor end of tRNA(Glu). This Wolbachia pipientis subsp. Culex pipiens (strain wPip) protein is Glutamate--tRNA ligase 2.